Consider the following 430-residue polypeptide: 3-phosphoshikimate 1-carboxyvinyltransferase (430 aa).

Positions 23, 24, and 28 each coordinate 3-phosphoshikimate. A phosphoenolpyruvate-binding site is contributed by K23. G93 and R121 together coordinate phosphoenolpyruvate. 4 residues coordinate 3-phosphoshikimate: S166, Q168, D313, and K340. Q168 is a phosphoenolpyruvate binding site. D313 (proton acceptor) is an active-site residue. Phosphoenolpyruvate is bound by residues R344 and R386.

This sequence belongs to the EPSP synthase family. As to quaternary structure, monomer.

The protein resides in the cytoplasm. The catalysed reaction is 3-phosphoshikimate + phosphoenolpyruvate = 5-O-(1-carboxyvinyl)-3-phosphoshikimate + phosphate. Its pathway is metabolic intermediate biosynthesis; chorismate biosynthesis; chorismate from D-erythrose 4-phosphate and phosphoenolpyruvate: step 6/7. In terms of biological role, catalyzes the transfer of the enolpyruvyl moiety of phosphoenolpyruvate (PEP) to the 5-hydroxyl of shikimate-3-phosphate (S3P) to produce enolpyruvyl shikimate-3-phosphate and inorganic phosphate. This Anaeromyxobacter sp. (strain Fw109-5) protein is 3-phosphoshikimate 1-carboxyvinyltransferase.